A 1150-amino-acid polypeptide reads, in one-letter code: Serine/threonine-protein phosphatase 2A regulatory subunit B'' subunit alpha (1150 aa).

The interval 661-693 (PEVIKIQNKPEKKPGTPLPPPATSPSSPRPLSP) is disordered. The span at 676 to 693 (TPLPPPATSPSSPRPLSP) shows a compositional bias: pro residues. EF-hand domains are found at residues 758–793 (CPLY…LLNN) and 972–1007 (RNPT…QCER). Ca(2+)-binding residues include D985, D987, D989, and E996. Positions 1105–1132 (AQFQEGFEDYETDEPASPSEFGNKSNKI) are disordered.

PP2A consists of a common heterodimeric core enzyme, composed of a 36 kDa catalytic subunit (subunit C) and a 65 kDa constant regulatory subunit (PR65 or subunit A), that associates with a variety of regulatory subunits. Proteins that associate with the core dimer include three families of regulatory subunits B (the R2/B/PR55/B55, R3/B''/PR72/PR130/PR59 and R5/B'/B56 families), the 48 kDa variable regulatory subunit, viral proteins, and cell signaling molecules. In terms of tissue distribution, expressed in heart, brain, placenta, lung, muscle and kidney.

Functionally, the B regulatory subunit might modulate substrate selectivity and catalytic activity, and might also direct the localization of the catalytic enzyme to a particular subcellular compartment. The protein is Serine/threonine-protein phosphatase 2A regulatory subunit B'' subunit alpha (PPP2R3A) of Homo sapiens (Human).